A 149-amino-acid polypeptide reads, in one-letter code: Alpha-crystallin A chain (149 aa).

Positions 41-149 constitute a sHSP domain; that stretch reads LFRTVLESGI…DTSYSERPIP (109 aa). Positions 89, 91, and 96 each coordinate Zn(2+).

It belongs to the small heat shock protein (HSP20) family. As to quaternary structure, heteropolymer composed of three CRYAA and one CRYAB subunits. Inter-subunit bridging via zinc ions enhances stability, which is crucial as there is no protein turn over in the lens. Zinc coordination is achieved at least by His-89, Glu-91 and His-96. His-83 and Glu-85 come from the same molecule within the oligomer, while His-90 residue is provided by another molecule. Can also form homodimers and homotetramers (dimers of dimers) which serve as the building blocks of homooligomers.

It localises to the cytoplasm. The protein resides in the nucleus. Contributes to the transparency and refractive index of the lens. May act as a chaperone, preventing aggregation of various proteins under a wide range of stress conditions. In Trachemys scripta elegans (Red-eared slider turtle), this protein is Alpha-crystallin A chain (CRYAA).